Reading from the N-terminus, the 1169-residue chain is Phospholipid-transporting ATPase IF (1169 aa).

Topologically, residues 1–47 (LGFDPPHQSDTRTIYIANRFPQNGLYTPQKFIDNRIISSKYTVWNFV) are cytoplasmic. The chain crosses the membrane as a helical span at residues 48–69 (PKNLFEQFRRVANFYFLIIFLV). Topologically, residues 70–74 (QLMID) are extracellular. A helical transmembrane segment spans residues 75–96 (TPTSPITSGLPLFFVITVTAIK). At 97–281 (QGYEDWLRHN…SAVEKSMNTF (185 aa)) the chain is on the cytoplasmic side. Residues 282–303 (LIIYLIILISEAIISTILKYTW) traverse the membrane as a helical segment. Over 304–333 (QAEEKWDEPWYNQKTEHQRNSSKILRFISD) the chain is Extracellular. Residues 334–351 (FLAFLVLYNFIIPISLYV) form a helical membrane-spanning segment. Topologically, residues 352–868 (TVEMQKFLGS…HGHFYYIRIA (517 aa)) are cytoplasmic. Aspartate 399 functions as the 4-aspartylphosphate intermediate in the catalytic mechanism. The ATP site is built by aspartate 399, lysine 400, threonine 401, glutamate 523, phenylalanine 564, lysine 587, arginine 618, threonine 698, glycine 699, aspartate 700, arginine 786, and lysine 792. Aspartate 399 provides a ligand contact to Mg(2+). Residue threonine 401 coordinates Mg(2+). The required for binding to the RING-finger of HLTF stretch occupies residues 794-802 (KVIRLIKIS). Position 813 (aspartate 813) interacts with Mg(2+). ATP contacts are provided by asparagine 816 and aspartate 817. Residue aspartate 817 coordinates Mg(2+). The helical transmembrane segment at 869 to 890 (TLVQYFFYKNVCFITPQFLYQF) threads the bilayer. Over 891-902 (YCLFSQQTLYDS) the chain is Extracellular. Residues 903 to 922 (VYLTLYNICFTSLPILIYSL) traverse the membrane as a helical segment. Over 923–952 (LEQHIDPHILQNKPTLYRDISKNRLLSIKT) the chain is Cytoplasmic. A helical membrane pass occupies residues 953–974 (FLYWTILGFSRSFIFLFGSYFL). The Extracellular segment spans residues 975-989 (IGKDASLLGNGQMFG). A helical membrane pass occupies residues 990–1012 (NWTFGTLVFTVMVITVTVKMALE). Residues 1013–1017 (THFWT) are Cytoplasmic-facing. Residues 1018–1039 (WINHLVTWGSIIFYFVFSLFYG) traverse the membrane as a helical segment. Residues 1040 to 1057 (GILWPFLGSQNMYFVFIQ) lie on the Extracellular side of the membrane. Residues 1058–1082 (LVSSGSAWFAIILMVVTCLFLDVMK) form a helical membrane-spanning segment. Topologically, residues 1083 to 1169 (KVFDRQLHPT…TLSTMDSSTC (87 aa)) are cytoplasmic. Position 1146 is a phosphoserine (serine 1146).

It belongs to the cation transport ATPase (P-type) (TC 3.A.3) family. Type IV subfamily. Component of a P4-ATPase flippase complex which consists of a catalytic alpha subunit ATP11B and an accessory beta subunit TMEM30A. As to quaternary structure, interacts with HLTF (via the RING-finger). Mg(2+) is required as a cofactor. In terms of tissue distribution, ubiquitously expressed.

It localises to the recycling endosome membrane. It is found in the early endosome. The protein resides in the endoplasmic reticulum. Its subcellular location is the golgi apparatus. The protein localises to the trans-Golgi network. It localises to the nucleus inner membrane. It catalyses the reaction ATP + H2O + phospholipidSide 1 = ADP + phosphate + phospholipidSide 2.. The catalysed reaction is a 1,2-diacyl-sn-glycero-3-phospho-L-serine(out) + ATP + H2O = a 1,2-diacyl-sn-glycero-3-phospho-L-serine(in) + ADP + phosphate + H(+). It carries out the reaction a 1,2-diacyl-sn-glycero-3-phosphoethanolamine(out) + ATP + H2O = a 1,2-diacyl-sn-glycero-3-phosphoethanolamine(in) + ADP + phosphate + H(+). Its function is as follows. Catalytic component of a P4-ATPase flippase complex which catalyzes the hydrolysis of ATP coupled to the transport of aminophospholipids, phosphatidylserines (PS) and phosphatidylethanolamines (PE), from the outer to the inner leaflet of intracellular membranes. May contribute to the maintenance of membrane lipid asymmetry in endosome compartment. Functionally, appears to play a role in the subnuclear trafficking of transcription factors with RING motifs. The chain is Phospholipid-transporting ATPase IF (ATP11B) from Oryctolagus cuniculus (Rabbit).